Here is a 198-residue protein sequence, read N- to C-terminus: Ribosome maturation factor RimP (198 aa).

Belongs to the RimP family.

The protein localises to the cytoplasm. Its function is as follows. Required for maturation of 30S ribosomal subunits. The protein is Ribosome maturation factor RimP of Rhizobium etli (strain CIAT 652).